We begin with the raw amino-acid sequence, 454 residues long: Glutamate mutase epsilon subunit (454 aa).

Arg67 is an L-glutamate binding site. Adenosylcob(III)alamin is bound at residue Gly69. Arg99 contacts L-glutamate. Residue Asn122 participates in adenosylcob(III)alamin binding. Residues 148 to 149 (RH), Glu170, and Tyr176 each bind L-glutamate. Pro179 is a binding site for adenosylcob(III)alamin. An L-glutamate-binding site is contributed by Tyr180. Adenosylcob(III)alamin is bound by residues Phe296, Lys325, Glu329, and Ile333.

The protein belongs to the methylaspartate mutase GlmE subunit family. Heterotetramer composed of 2 epsilon subunits (GlmE) and 2 sigma subunits (GlmS). GlmE exists as a homodimer and GlmS as a monomer. It depends on adenosylcob(III)alamin as a cofactor.

It catalyses the reaction (2S,3S)-3-methyl-L-aspartate = L-glutamate. The protein operates within amino-acid degradation; L-glutamate degradation via mesaconate pathway; acetate and pyruvate from L-glutamate: step 1/4. In terms of biological role, catalyzes the carbon skeleton rearrangement of L-glutamate to L-threo-3-methylaspartate ((2S,3S)-3-methylaspartate). This Shigella dysenteriae serotype 1 (strain Sd197) protein is Glutamate mutase epsilon subunit.